The following is a 177-amino-acid chain: NADH-quinone oxidoreductase subunit B (177 aa).

[4Fe-4S] cluster is bound by residues Cys-56, Cys-57, Cys-121, and Cys-151.

Belongs to the complex I 20 kDa subunit family. NDH-1 is composed of 14 different subunits. Subunits NuoB, C, D, E, F, and G constitute the peripheral sector of the complex. [4Fe-4S] cluster is required as a cofactor.

It localises to the cell inner membrane. The enzyme catalyses a quinone + NADH + 5 H(+)(in) = a quinol + NAD(+) + 4 H(+)(out). In terms of biological role, NDH-1 shuttles electrons from NADH, via FMN and iron-sulfur (Fe-S) centers, to quinones in the respiratory chain. Couples the redox reaction to proton translocation (for every two electrons transferred, four hydrogen ions are translocated across the cytoplasmic membrane), and thus conserves the redox energy in a proton gradient. The sequence is that of NADH-quinone oxidoreductase subunit B from Jannaschia sp. (strain CCS1).